Consider the following 102-residue polypeptide: Protein B1 (102 aa).

The disordered stretch occupies residues 1-102 (MLNDAKQTRA…AQPQPSNNRK (102 aa)). 2 stretches are compositionally biased toward polar residues: residues 8 to 17 (TRANPGTSRP) and 51 to 65 (GKTN…TAGE). Residues 75–88 (KGPRGGKTNTRRTP) show a composition bias toward basic residues.

Its function is as follows. Not known. Encoded on a subgenomic RNA (RNA3) synthesized during replication and which is co-terminal with RNA1. This chain is Protein B1 (B1), found in Black beetle virus (BBV).